The primary structure comprises 418 residues: Tektin-1 (418 aa).

4 coiled-coil regions span residues 20–107 (NKSQ…SYKE), 134–177 (QELQ…DLRD), 266–308 (NGLK…QQEG), and 332–383 (IAQY…ENTI).

It belongs to the tektin family. In terms of assembly, microtubule inner protein component of sperm flagellar doublet microtubules. Ubiquitinated, leading to its degradation. Deubiquitinated by USP16, promoting its stability.

Its subcellular location is the cytoplasm. The protein resides in the cytoskeleton. It is found in the cilium axoneme. It localises to the flagellum axoneme. Functionally, microtubule inner protein (MIP) part of the dynein-decorated doublet microtubules (DMTs) in cilia and flagellar axoneme. Forms filamentous polymers in the walls of ciliary and flagellar microtubules. The polypeptide is Tektin-1 (Tekt1) (Mus musculus (Mouse)).